The sequence spans 406 residues: Phosphoglycerate kinase (406 aa).

Residues 22–24 (DLN), Arg37, 60–63 (HLGN), Arg119, and Arg152 each bind substrate. ATP contacts are provided by residues Lys202, Glu325, and 355 to 358 (GGDT).

The protein belongs to the phosphoglycerate kinase family. Monomer.

It localises to the cytoplasm. It catalyses the reaction (2R)-3-phosphoglycerate + ATP = (2R)-3-phospho-glyceroyl phosphate + ADP. It participates in carbohydrate degradation; glycolysis; pyruvate from D-glyceraldehyde 3-phosphate: step 2/5. This Orientia tsutsugamushi (strain Ikeda) (Rickettsia tsutsugamushi) protein is Phosphoglycerate kinase.